The primary structure comprises 207 residues: Large ribosomal subunit protein bL25 (207 aa).

The segment at 171-207 (EEETVVTVSAPRAEEEPTTTEAPEPEAVHGNDEEPVE) is disordered. Over residues 196–207 (EAVHGNDEEPVE) the composition is skewed to basic and acidic residues.

It belongs to the bacterial ribosomal protein bL25 family. CTC subfamily. As to quaternary structure, part of the 50S ribosomal subunit; part of the 5S rRNA/L5/L18/L25 subcomplex. Contacts the 5S rRNA. Binds to the 5S rRNA independently of L5 and L18.

Its function is as follows. This is one of the proteins that binds to the 5S RNA in the ribosome where it forms part of the central protuberance. In Listeria innocua serovar 6a (strain ATCC BAA-680 / CLIP 11262), this protein is Large ribosomal subunit protein bL25.